The sequence spans 964 residues: Myocardin-related transcription factor A (964 aa).

The mediates interaction with SCAI and ACTB stretch occupies residues 1 to 291 (MTLLEPEMLM…KQDKGAPAMD (291 aa)). One copy of the RPEL 1 repeat lies at 15–40 (SVLQLKLQQRRTREELVSQGIMPPLK). Ser-41 carries the phosphoserine modification. The interval 41-58 (SPAAFHEQRRSLERARTE) is intervening spacer sequence 1. The RPEL 2 repeat unit spans residues 59–84 (DYLKRKIRSRPERAELVRMHILEETS). The short motif at 62-100 (KRKIRSRPERAELVRMHILEETSAEPSLQAKQLKLKRAR) is the Bipartite Nuclear localization signal element. The interval 85 to 102 (AEPSLQAKQLKLKRARLA) is intervening spacer sequence 2. The stretch at 103–128 (DDLNEKIAQRPGPMELVEKNILPVES) is one RPEL 3 repeat. Disordered stretches follow at residues 145–292 (ADSS…AMDS) and 328–371 (LPAP…RQSS). A phosphoserine mark is found at Ser-159, Ser-174, and Ser-191. Residues 186–197 (SATSISPTQVLS) show a composition bias toward polar residues. Residues 215–224 (PPLPPAPLLP) are compositionally biased toward pro residues. Residues 251-266 (ASEKSQRSKKAKELKP) show a composition bias toward basic and acidic residues. Residues 340–365 (GSSAPTPSRSLSTSSSPSSGTPGPSG) show a composition bias toward low complexity. Phosphoserine is present on residues Ser-349 and Ser-351. Phosphothreonine is present on Thr-352. A phosphoserine mark is found at Ser-355 and Ser-358. At Thr-360 the chain carries Phosphothreonine. Phosphoserine is present on Ser-371. An SAP domain is found at 385 to 419 (LDDMKVAELKQELKLRSLPVSGTKTELIERLRAYQ). 2 positions are modified to phosphoserine: Ser-423 and Ser-484. The segment at 484–508 (STGSTPPVSPTPSERSLLSTGDENS) is disordered. The residue at position 485 (Thr-485) is a Phosphothreonine. Ser-487 carries the post-translational modification Phosphoserine. Phosphothreonine is present on Thr-488. Phosphoserine is present on Ser-492. Residue Thr-494 is modified to Phosphothreonine. Ser-496 carries the phosphoserine modification. The segment covering 497-508 (ERSLLSTGDENS) has biased composition (polar residues). Phosphoserine is present on residues Ser-520, Ser-530, Ser-544, and Ser-548. Residues 552–600 (RAELEGLDKDQMLQEKDKQIEELTRMLQQKQQLVELLRLQLEQQKRAQQ) are a coiled coil. Ser-605, Ser-606, Ser-651, Ser-687, Ser-718, Ser-724, and Ser-728 each carry phosphoserine. The interval 638–673 (TTNHGDTQAPAPESPPVVVKQEAGPPEPDLAPSSQL) is disordered. Disordered stretches follow at residues 706–779 (NKSA…SSSQ) and 796–849 (ADFK…RLED). The span at 715-727 (PAGSPQQPLSQPG) shows a compositional bias: low complexity. Positions 764–779 (TVTQQPKQQENGSSSQ) are enriched in polar residues. Residues 796–810 (ADFKEPPSLPGKEKS) show a composition bias toward basic and acidic residues. Ser-810 carries the post-translational modification Phosphoserine. Thr-822 is subject to Phosphothreonine. Phosphoserine is present on residues Ser-826 and Ser-840. A Phosphothreonine modification is found at Thr-842. A Phosphoserine modification is found at Ser-892.

As to quaternary structure, interacts with SRF, forming the SRF-MRTFA nuclear complex which binds the 5'-CArG-3' consensus motif (CArG box) on DNA via SRF. Interacts (via RPEL repeats) with globular actin (G-actin), thereby regulating its subcellular location and activity of the complex formed with SRF. Either forms a trivalent (by binding three G-actin monomers) or pentavalent (by binding five G-actin monomers) complex with G-actin. Forms a nuclear ternary complex with SCAI and SRF, leading to suppress MRTFA-induced SRF transcriptional activity. Interacts with beta-actin (ACTB); interaction with ACTB prevents interaction with SCAI. Interacts with MRTFB. Post-translationally, phosphorylation at Ser-41 by Erk inhibits binding of globular actin (G-actin), unmasking the nuclear localization signal (NLS) and promoting nuclear import. Expressed in heart, brain, spleen, lung, liver, muscle, kidney and testis.

It is found in the cytoplasm. The protein resides in the nucleus. Functionally, transcription coactivator that associates with the serum response factor (SRF) transcription factor to control expression of genes regulating the cytoskeleton during development, morphogenesis and cell migration. The SRF-MRTFA complex activity responds to Rho GTPase-induced changes in cellular globular actin (G-actin) concentration, thereby coupling cytoskeletal gene expression to cytoskeletal dynamics. MRTFA binds G-actin via its RPEL repeats, regulating activity of the MRTFA-SRF complex. Activity is also regulated by filamentous actin (F-actin) in the nucleus. This Mus musculus (Mouse) protein is Myocardin-related transcription factor A (Mrtfa).